We begin with the raw amino-acid sequence, 322 residues long: UDP-N-acetylenolpyruvoylglucosamine reductase (322 aa).

The FAD-binding PCMH-type domain occupies 36–202; it reads RAGGPAQVLF…TSVLFEGVPG (167 aa). Residue Arg-182 is part of the active site. Ser-231 (proton donor) is an active-site residue. The active site involves Glu-301.

It belongs to the MurB family. The cofactor is FAD.

The protein resides in the cytoplasm. It carries out the reaction UDP-N-acetyl-alpha-D-muramate + NADP(+) = UDP-N-acetyl-3-O-(1-carboxyvinyl)-alpha-D-glucosamine + NADPH + H(+). It participates in cell wall biogenesis; peptidoglycan biosynthesis. Functionally, cell wall formation. This Brucella abortus (strain S19) protein is UDP-N-acetylenolpyruvoylglucosamine reductase.